The sequence spans 561 residues: Carboxylesterase 4A (561 aa).

The signal sequence occupies residues 1 to 20 (MRWILCWSLTLCLMAQTALG). C88 and C116 are disulfide-bonded. Residue N214 is glycosylated (N-linked (GlcNAc...) asparagine). The active-site Acyl-ester intermediate is S221. C273 and C284 are oxidised to a cystine. N-linked (GlcNAc...) asparagine glycosylation is present at N276. E353 (charge relay system) is an active-site residue. N388 carries an N-linked (GlcNAc...) asparagine glycan. H467 acts as the Charge relay system in catalysis.

This sequence belongs to the type-B carboxylesterase/lipase family.

It localises to the secreted. Probable carboxylesterase. The chain is Carboxylesterase 4A (CES4A) from Homo sapiens (Human).